Here is a 128-residue protein sequence, read N- to C-terminus: Holo-[acyl-carrier-protein] synthase (128 aa).

Mg(2+)-binding residues include D9 and E56.

Belongs to the P-Pant transferase superfamily. AcpS family. The cofactor is Mg(2+).

It localises to the cytoplasm. It catalyses the reaction apo-[ACP] + CoA = holo-[ACP] + adenosine 3',5'-bisphosphate + H(+). Its function is as follows. Transfers the 4'-phosphopantetheine moiety from coenzyme A to a Ser of acyl-carrier-protein. This Pelagibacter ubique (strain HTCC1062) protein is Holo-[acyl-carrier-protein] synthase.